We begin with the raw amino-acid sequence, 187 residues long: Inner membrane-spanning protein YciB (187 aa).

The next 5 helical transmembrane spans lie at 25–45 (ATGA…ALYK), 50–70 (MQLI…FLHD), 76–96 (WKVT…HVMG), 118–138 (INWA…YVAY), and 148–168 (FKVF…GGYI).

The protein belongs to the YciB family.

It is found in the cell inner membrane. Plays a role in cell envelope biogenesis, maintenance of cell envelope integrity and membrane homeostasis. The protein is Inner membrane-spanning protein YciB of Vibrio vulnificus (strain CMCP6).